We begin with the raw amino-acid sequence, 761 residues long: Xaa-Pro dipeptidyl-peptidase (761 aa).

Residues S347, D467, and H497 each act as charge relay system in the active site.

The protein belongs to the peptidase S15 family. Homodimer.

Its subcellular location is the cytoplasm. The catalysed reaction is Hydrolyzes Xaa-Pro-|- bonds to release unblocked, N-terminal dipeptides from substrates including Ala-Pro-|-p-nitroanilide and (sequentially) Tyr-Pro-|-Phe-Pro-|-Gly-Pro-|-Ile.. Its function is as follows. Removes N-terminal dipeptides sequentially from polypeptides having unsubstituted N-termini provided that the penultimate residue is proline. The polypeptide is Xaa-Pro dipeptidyl-peptidase (Streptococcus agalactiae serotype Ia (strain ATCC 27591 / A909 / CDC SS700)).